The sequence spans 756 residues: Hyperosmolality-gated Ca2+ permeable channel 1.5 (756 aa).

The next 10 helical transmembrane spans lie at 7-27 (IGVA…AFAI), 101-121 (IYLL…TVMV), 154-174 (SRFW…CFVL), 373-393 (LVIA…IAFV), 425-445 (FLPG…LMLM), 465-485 (YYMF…TALQ), 510-530 (ATFF…GEIL), 574-594 (FILG…ILVF), 628-648 (VVIA…TKKA), and 651-671 (STPL…FCQG). The interval 731–756 (PDKTPDLVATKRGSRRFNSGSAETFT) is disordered. A compositionally biased stretch (polar residues) spans 746–756 (RFNSGSAETFT).

Belongs to the CSC1 (TC 1.A.17) family.

It localises to the membrane. In terms of biological role, acts as an osmosensitive calcium-permeable cation channel. The polypeptide is Hyperosmolality-gated Ca2+ permeable channel 1.5 (Arabidopsis thaliana (Mouse-ear cress)).